The primary structure comprises 77 residues: ATP synthase subunit c (77 aa).

2 consecutive transmembrane segments (helical) span residues 13-33 (IATVGYGLAAIGPGIGVGIVA) and 55-75 (FLGIAFSEALALIGLATYFIF).

Belongs to the ATPase C chain family. As to quaternary structure, F-type ATPases have 2 components, F(1) - the catalytic core - and F(0) - the membrane proton channel. F(1) has five subunits: alpha(3), beta(3), gamma(1), delta(1), epsilon(1). F(0) has three main subunits: a(1), b(2) and c(10-14). The alpha and beta chains form an alternating ring which encloses part of the gamma chain. F(1) is attached to F(0) by a central stalk formed by the gamma and epsilon chains, while a peripheral stalk is formed by the delta and b chains.

It is found in the cell membrane. Its function is as follows. F(1)F(0) ATP synthase produces ATP from ADP in the presence of a proton or sodium gradient. F-type ATPases consist of two structural domains, F(1) containing the extramembraneous catalytic core and F(0) containing the membrane proton channel, linked together by a central stalk and a peripheral stalk. During catalysis, ATP synthesis in the catalytic domain of F(1) is coupled via a rotary mechanism of the central stalk subunits to proton translocation. Key component of the F(0) channel; it plays a direct role in translocation across the membrane. A homomeric c-ring of between 10-14 subunits forms the central stalk rotor element with the F(1) delta and epsilon subunits. This is ATP synthase subunit c from Clavibacter sepedonicus (Clavibacter michiganensis subsp. sepedonicus).